Consider the following 194-residue polypeptide: Dephospho-CoA kinase (194 aa).

The 191-residue stretch at 4–194 (VIGLTGSIGM…VKEILQKLGA (191 aa)) folds into the DPCK domain. 12 to 17 (GMGKTT) provides a ligand contact to ATP.

The protein belongs to the CoaE family.

Its subcellular location is the cytoplasm. The enzyme catalyses 3'-dephospho-CoA + ATP = ADP + CoA + H(+). It functions in the pathway cofactor biosynthesis; coenzyme A biosynthesis; CoA from (R)-pantothenate: step 5/5. In terms of biological role, catalyzes the phosphorylation of the 3'-hydroxyl group of dephosphocoenzyme A to form coenzyme A. The chain is Dephospho-CoA kinase from Agrobacterium fabrum (strain C58 / ATCC 33970) (Agrobacterium tumefaciens (strain C58)).